The following is a 2119-amino-acid chain: Outer kinetochore KNL1 complex subunit KNL1 (2119 aa).

Positions M1–V59 are disordered. Positions M1–T202 are may mediate oligomerization. Interaction with microtubules stretches follow at residues R17–L34 and R53–S80. Positions H23 to S80 are interaction with PP1CA; contains the protein phosphatase 1 (PP1) interaction motifs SILK, RVXF and phi-phi. S24, S32, and S60 each carry phosphoserine. An interaction with BUB1 region spans residues E124 to G140. Residues E160–T179 are interaction with BUB1B. At S538 the chain carries Phosphoserine. Residues T540 and T739 each carry the phosphothreonine modification. The stretch at D723–D827 is repeat 1. Residues D723–D1027 are 2 X 104 AA approximate repeats. 2 positions are modified to phosphoserine: S794 and S878. The stretch at K923–D1027 is repeat 2. Phosphoserine occurs at positions 1243 and 1464. Residues S1557–D1583 are disordered. The span at N1566–D1583 shows a compositional bias: basic and acidic residues. The Nuclear localization signal motif lies at T1577–I1590. A phosphoserine mark is found at S1616, S1627, and S1642. Positions K1763–Q1890 are required for interaction with ZWINT. Residues V1799–Q1890 adopt a coiled-coil conformation. Residues E1873 to A2093 are interaction with NSL1, DSN1 and required for assembly into the outer kinetochore.

In terms of assembly, component of the KNL1 complex composed of KNL1 and ZWINT. Part of the ten-subunit outer kinetochore KMN network that includes the KNL1, MIS12 and NDC80 complexes; a bioriented kinetochore contains approximately 150 copies of the network. Interacts (via C-terminus) with the MIS12 complex subunits NSL1 (via C-terminus), PMF1 and DSN1; the interaction is direct. Interacts (via N-terminal region) with BUB1B (via BUB1 N-terminal domain); the interaction is direct and is required for cell cycle arrest upon activation of the mitotic spindle assembly checkpoint. Interacts (via N-terminal region) with BUB1 (via BUB1 N-terminal domain); the interaction is direct. Interacts with the protein phosphatase PP1 subunit PPP1CA; the interaction is direct and mutually exclusive with binding to microtubules. Interacts with the protein phosphatase PP1 subunit PPP1CC; the interaction is direct and mutually exclusive with binding to microtubules. In terms of processing, phosphorylation by AURKB negatively regulates its interaction with protein phosphatase 1 (PP1) subunit PPP1CA and with microtubules. In terms of tissue distribution, expressed in oocytes during meiotic progression (at protein level). Expressed during spermatogenesis.

It localises to the nucleus. The protein resides in the chromosome. The protein localises to the centromere. Its subcellular location is the kinetochore. It is found in the cytoplasm. Functionally, acts as a component of the outer kinetochore KNL1 complex that serves as a docking point for spindle assembly checkpoint components and mediates microtubule-kinetochore interactions. Kinetochores, consisting of a centromere-associated inner segment and a microtubule-contacting outer segment, play a crucial role in chromosome segregation by mediating the physical connection between centromeric DNA and spindle microtubules. The outer kinetochore is made up of the ten-subunit KMN network, comprising the MIS12, NDC80 and KNL1 complexes, and auxiliary microtubule-associated components; together they connect the outer kinetochore with the inner kinetochore, bind microtubules, and mediate interactions with mitotic checkpoint proteins that delay anaphase until chromosomes are bioriented on the spindle. Required for kinetochore binding by a distinct subset of kMAPs (kinetochore-bound microtubule-associated proteins) and motors. Acts in coordination with CENPK to recruit the NDC80 complex to the outer kinetochore. Can bind either to microtubules or to the protein phosphatase 1 (PP1) catalytic subunits PPP1CA and PPP1CC (via overlapping binding sites), it has higher affinity for PP1. Recruits MAD2L1 to the kinetochore and also directly links BUB1 and BUB1B to the kinetochore. In addition to orienting mitotic chromosomes, it is also essential for alignment of homologous chromosomes during meiotic metaphase I. In meiosis I, required to activate the spindle assembly checkpoint at unattached kinetochores to correct erroneous kinetochore-microtubule attachments. This Mus musculus (Mouse) protein is Outer kinetochore KNL1 complex subunit KNL1.